A 216-amino-acid chain; its full sequence is UPF0502 protein PFL_4004 (216 aa).

It belongs to the UPF0502 family.

The protein is UPF0502 protein PFL_4004 of Pseudomonas fluorescens (strain ATCC BAA-477 / NRRL B-23932 / Pf-5).